The following is a 397-amino-acid chain: DNA-directed RNA polymerase subunit Rpo1C (397 aa).

This sequence belongs to the RNA polymerase beta' chain family. Part of the RNA polymerase complex.

It is found in the cytoplasm. The enzyme catalyses RNA(n) + a ribonucleoside 5'-triphosphate = RNA(n+1) + diphosphate. Its function is as follows. DNA-dependent RNA polymerase (RNAP) catalyzes the transcription of DNA into RNA using the four ribonucleoside triphosphates as substrates. Forms part of the jaw domain. This is DNA-directed RNA polymerase subunit Rpo1C from Pyrococcus horikoshii (strain ATCC 700860 / DSM 12428 / JCM 9974 / NBRC 100139 / OT-3).